A 228-amino-acid polypeptide reads, in one-letter code: Octanoyltransferase (228 aa).

The BPL/LPL catalytic domain occupies 30–214 (KKIGDTLLLL…YFGKVFGKSL (185 aa)). Residues 75 to 82 (RGGDVTYH), 144 to 146 (AIG), and 157 to 159 (GFA) contribute to the substrate site. The active-site Acyl-thioester intermediate is C175.

It belongs to the LipB family.

It is found in the cytoplasm. The catalysed reaction is octanoyl-[ACP] + L-lysyl-[protein] = N(6)-octanoyl-L-lysyl-[protein] + holo-[ACP] + H(+). The protein operates within protein modification; protein lipoylation via endogenous pathway; protein N(6)-(lipoyl)lysine from octanoyl-[acyl-carrier-protein]: step 1/2. Its function is as follows. Catalyzes the transfer of endogenously produced octanoic acid from octanoyl-acyl-carrier-protein onto the lipoyl domains of lipoate-dependent enzymes. Lipoyl-ACP can also act as a substrate although octanoyl-ACP is likely to be the physiological substrate. This chain is Octanoyltransferase, found in Caldicellulosiruptor bescii (strain ATCC BAA-1888 / DSM 6725 / KCTC 15123 / Z-1320) (Anaerocellum thermophilum).